A 111-amino-acid polypeptide reads, in one-letter code: uncharacterized protein (111 aa).

3 helical membrane-spanning segments follow: residues 4–23 (LHQV…LGHV), 39–61 (IYLG…VLSA), and 65–84 (SGIQ…EAVL).

The protein resides in the cell membrane. This is an uncharacterized protein from Bacillus subtilis (strain 168).